The primary structure comprises 97 residues: YcgL domain-containing protein PMI1171 (97 aa).

One can recognise a YcgL domain in the interval 3–87 (MICAIYRSTK…PVESMLNAYL (85 aa)).

The polypeptide is YcgL domain-containing protein PMI1171 (Proteus mirabilis (strain HI4320)).